Consider the following 269-residue polypeptide: HTH-type transcriptional activator ArnR1 (269 aa).

Residues 1-217 are Cytoplasmic-facing; sequence MSSMNKRVFD…LLKLTGSYRY (217 aa). The segment at residues 42 to 65 is a DNA-binding region (H-T-H motif); it reads TTEISQTINTSRKSIIDAIRKLVD. The helical transmembrane segment at 218–238 threads the bilayer; the sequence is EIALTKVMLFNVISIPVLMYL. At 239 to 241 the chain is on the extracellular side; it reads KDQ. Residues 242 to 262 form a helical membrane-spanning segment; that stretch reads LGILEAIWLYVIILLPLLSIF. Over 263–269 the chain is Cytoplasmic; it reads AEIFNRI.

Its subcellular location is the cell membrane. Involved in regulation of archaellar gene expression. May activate flaB transcription upon nutrient starvation by acting on the flaB promoter. The polypeptide is HTH-type transcriptional activator ArnR1 (Sulfolobus acidocaldarius (strain ATCC 33909 / DSM 639 / JCM 8929 / NBRC 15157 / NCIMB 11770)).